We begin with the raw amino-acid sequence, 223 residues long: MEDCLIEDQTSFYSEAEHYWKDVPPTVDGMLGGYGSISSIDINGSKKFLQKFLGEGQGKTGTGCALDCGAGIGRITKRLLLPLFRTVDLVDVTQEFLDKARTYLGEESKRVENYFCCGLQDFQPQPERYDVIWIQWVIGHLTDDHLVEFLRRCRSGLRPEGLIVVKDNVAYEGVIPDDVDSSVCRDLNVLHRLVARAGLSIIYEEQQQNFPEEIYQVHALALR.

Residues Gly69, Arg74, 91–93 (DVT), 119–120 (LQ), and Gln135 contribute to the S-adenosyl-L-methionine site.

This sequence belongs to the methyltransferase superfamily. NTM1 family.

It localises to the nucleus. It catalyses the reaction N-terminal L-alanyl-L-prolyl-L-lysyl-[protein] + 3 S-adenosyl-L-methionine = N-terminal N,N,N-trimethyl-L-alanyl-L-prolyl-L-lysyl-[protein] + 3 S-adenosyl-L-homocysteine + 3 H(+). The enzyme catalyses N-terminal L-seryl-L-prolyl-L-lysyl-[protein] + 3 S-adenosyl-L-methionine = N-terminal N,N,N-trimethyl-L-seryl-L-prolyl-L-lysyl-[protein] + 3 S-adenosyl-L-homocysteine + 3 H(+). It carries out the reaction N-terminal L-prolyl-L-prolyl-L-lysyl-[protein] + 2 S-adenosyl-L-methionine = N-terminal N,N-dimethyl-L-prolyl-L-prolyl-L-lysyl-[protein] + 2 S-adenosyl-L-homocysteine + 2 H(+). Its function is as follows. Distributive alpha-N-methyltransferase that methylates the N-terminus of target proteins containing the N-terminal motif [Ala/Gly/Pro/Ser]-Pro-Lys when the initiator Met is cleaved. Specifically catalyzes mono-, di- or tri-methylation of the exposed alpha-amino group of the Ala, Gly or Ser residue in the [Ala/Gly/Ser]-Pro-Lys motif and mono- or di-methylation of Pro in the Pro-Pro-Lys motif. Required during mitosis for normal bipolar spindle formation and chromosome segregation via its action on target proteins. The chain is N-terminal Xaa-Pro-Lys N-methyltransferase 1 (ntmt1) from Danio rerio (Zebrafish).